The chain runs to 118 residues: Large ribosomal subunit protein bL20 (118 aa).

Belongs to the bacterial ribosomal protein bL20 family.

Functionally, binds directly to 23S ribosomal RNA and is necessary for the in vitro assembly process of the 50S ribosomal subunit. It is not involved in the protein synthesizing functions of that subunit. The polypeptide is Large ribosomal subunit protein bL20 (Pseudomonas aeruginosa (strain LESB58)).